Here is a 353-residue protein sequence, read N- to C-terminus: Ornithine racemase (353 aa).

Lysine 35 (proton acceptor) is an active-site residue. Lysine 35 carries the post-translational modification N6-(pyridoxal phosphate)lysine. Arginine 128 is a binding site for substrate.

It belongs to the alanine racemase family. As to quaternary structure, homodimer. It depends on pyridoxal 5'-phosphate as a cofactor.

The catalysed reaction is L-ornithine = D-ornithine. Its function is as follows. Involved in the ornithine fermentation pathway. Catalyzes the conversion of L-ornithine to D-ornithine. OR could also racemize basic amino acids such as lysine and arginine. Serine, asparagine and alanine could be also converted by OR, but at a lower rate. The protein is Ornithine racemase of Acetoanaerobium sticklandii (strain ATCC 12662 / DSM 519 / JCM 1433 / CCUG 9281 / NCIMB 10654 / HF) (Clostridium sticklandii).